Consider the following 225-residue polypeptide: Protein ERP3 (225 aa).

The signal sequence occupies residues 1–23; sequence MSNLCVLFFQFFFLAQFFAEASP. The Lumenal portion of the chain corresponds to 24–195; the sequence is LTFELNKGRK…STEHRIVMFS (172 aa). In terms of domain architecture, GOLD spans 33–172; that stretch reads KECLYTLTPE…LHVLERNIQY (140 aa). A compositionally biased stretch (basic residues) spans 129-138; it reads ERRKARKAQR. Residues 129-149 are disordered; it reads ERRKARKAQRNLRDSKTDPLQ. The chain crosses the membrane as a helical span at residues 196 to 216; sequence IYGILLIIGMSCAQIAILEFI. Topologically, residues 217–225 are cytoplasmic; the sequence is FRESRKHNV.

This sequence belongs to the EMP24/GP25L family.

It localises to the endoplasmic reticulum membrane. Functionally, involved in vesicular protein trafficking. In Saccharomyces cerevisiae (strain ATCC 204508 / S288c) (Baker's yeast), this protein is Protein ERP3 (ERP3).